The sequence spans 317 residues: Ribosomal protein L11 methyltransferase (317 aa).

The S-adenosyl-L-methionine site is built by Thr-158, Gly-179, Asp-201, and Asn-244.

Belongs to the methyltransferase superfamily. PrmA family.

It localises to the cytoplasm. It carries out the reaction L-lysyl-[protein] + 3 S-adenosyl-L-methionine = N(6),N(6),N(6)-trimethyl-L-lysyl-[protein] + 3 S-adenosyl-L-homocysteine + 3 H(+). Methylates ribosomal protein L11. This is Ribosomal protein L11 methyltransferase from Streptococcus pyogenes serotype M1.